Consider the following 148-residue polypeptide: Snaclec 7 (148 aa).

The N-terminal stretch at 1 to 23 is a signal peptide; it reads MGRFIFVSFGLLVVFLSLSGTGA. 3 cysteine pairs are disulfide-bonded: Cys27-Cys38, Cys55-Cys144, and Cys121-Cys136. The C-type lectin domain occupies 34–145; it reads HERHCYKVIN…CSSTHPFVCK (112 aa).

It belongs to the snaclec family. In terms of assembly, heterodimer; disulfide-linked. In terms of tissue distribution, expressed by the venom gland.

The protein resides in the secreted. In terms of biological role, interferes with one step of hemostasis (modulation of platelet aggregation, or coagulation cascade, for example). The sequence is that of Snaclec 7 from Echis pyramidum leakeyi (Leakey's carpet viper).